The following is a 168-amino-acid chain: UPF0478 protein SH1183 (168 aa).

Residues 7-27 traverse the membrane as a helical segment; sequence IAGIIAAIAFLVLCIGIVVVL. Residues 144–168 are disordered; that stretch reads YRNTSVGNDANHSNENYTTNVEKNF.

It belongs to the UPF0478 family.

Its subcellular location is the cell membrane. The polypeptide is UPF0478 protein SH1183 (Staphylococcus haemolyticus (strain JCSC1435)).